Here is a 474-residue protein sequence, read N- to C-terminus: UDP-N-acetylmuramate--L-alanine ligase (474 aa).

116–122 (GTHGKTT) is an ATP binding site.

The protein belongs to the MurCDEF family.

It localises to the cytoplasm. It carries out the reaction UDP-N-acetyl-alpha-D-muramate + L-alanine + ATP = UDP-N-acetyl-alpha-D-muramoyl-L-alanine + ADP + phosphate + H(+). Its pathway is cell wall biogenesis; peptidoglycan biosynthesis. Its function is as follows. Cell wall formation. This Hyphomonas neptunium (strain ATCC 15444) protein is UDP-N-acetylmuramate--L-alanine ligase.